The sequence spans 417 residues: Histidine--tRNA ligase (417 aa).

This sequence belongs to the class-II aminoacyl-tRNA synthetase family. In terms of assembly, homodimer.

It localises to the cytoplasm. It catalyses the reaction tRNA(His) + L-histidine + ATP = L-histidyl-tRNA(His) + AMP + diphosphate + H(+). This chain is Histidine--tRNA ligase, found in Acetivibrio thermocellus (strain ATCC 27405 / DSM 1237 / JCM 9322 / NBRC 103400 / NCIMB 10682 / NRRL B-4536 / VPI 7372) (Clostridium thermocellum).